A 157-amino-acid polypeptide reads, in one-letter code: MFCPFCRHPDSRVVDSRTSDDGLSIRRRRQCPECGRRFSTTETASLSVIKRNGVVEPFSREKIVTGVRKACQGRPVTDTDLAVLAQRVEEAIRATGASQIEANDIGLSILPPLRELDEVAYLRFASVYQGFDSLDDFEAAIAQLRVAHAATPDADAL.

Residues 3-34 fold into a zinc finger; sequence CPFCRHPDSRVVDSRTSDDGLSIRRRRQCPEC. The ATP-cone domain occupies 46-136; that stretch reads LSVIKRNGVV…VYQGFDSLDD (91 aa).

Belongs to the NrdR family. Zn(2+) is required as a cofactor.

Functionally, negatively regulates transcription of bacterial ribonucleotide reductase nrd genes and operons by binding to NrdR-boxes. The polypeptide is Transcriptional repressor NrdR (Clavibacter sepedonicus (Clavibacter michiganensis subsp. sepedonicus)).